The primary structure comprises 132 residues: Acid shock protein (132 aa).

The signal sequence occupies residues 1 to 21 (MKKVLALIVAATMGLSSVAFA). The propeptide occupies 22 to 69 (AETTAAATAAPAATSTTAAPAVEKAAPAKATHHKKHKATKQTTEQKAQ). The span at 30–50 (AAPAATSTTAAPAVEKAAPAK) shows a compositional bias: low complexity. The tract at residues 30–132 (AAPAATSTTA…AKKSATAPAA (103 aa)) is disordered. The span at 51–60 (ATHHKKHKAT) shows a compositional bias: basic residues. Positions 61–99 (KQTTEQKAQAAKKAVKKAPAQKAQAAKKAVKKAPVQKAQ) are enriched in low complexity. Positions 100 to 124 (AAKKHVKKAPAQKAQAAKKHHKTAK) are enriched in basic residues.

It belongs to the Asr family. Post-translationally, proteolytic processing gives rise to the active protein.

The protein localises to the periplasm. In terms of biological role, required for growth and/or survival at acidic conditions. The polypeptide is Acid shock protein (Yersinia enterocolitica serotype O:8 / biotype 1B (strain NCTC 13174 / 8081)).